The primary structure comprises 913 residues: Eukaryotic translation initiation factor 3 subunit C (913 aa).

The tract at residues 1–44 (MSRFFTTGSDSESESSLSGEELVTKPVGGNYGKQPLLLSEDEED) is disordered. The span at 8–21 (GSDSESESSLSGEE) shows a compositional bias: low complexity. Phosphoserine is present on residues S9, S11, S13, S15, S16, S18, and S39. K99 carries the post-translational modification N6-acetyllysine. 2 disordered regions span residues 157–301 (TSYK…GGEW) and 522–542 (QLTP…NEGE). Phosphoserine is present on residues S166, S178, S181, and S182. The segment covering 166–190 (SADEDAEKNEEDSEGSSDEDEDEDG) has biased composition (acidic residues). Residues 199–216 (KKSEAPSGESRKFLKKMD) show a composition bias toward basic and acidic residues. The span at 217-232 (DEDEDSEDSEDDEDWD) shows a compositional bias: acidic residues. A compositionally biased stretch (basic and acidic residues) spans 261 to 278 (PTTDEDKKAAEKKREDKA). Positions 522–531 (QLTPPEGSSK) are enriched in polar residues. T524 carries the post-translational modification Phosphothreonine. The residue at position 643 (K643) is an N6-acetyllysine. In terms of domain architecture, PCI spans 673–849 (FHLHINLELL…QTVVMHRTEP (177 aa)). Positions 885–913 (FRDQKDGYRKNEGYMRRGGYRQQQSQTAY) are disordered. Residues 886–899 (RDQKDGYRKNEGYM) are compositionally biased toward basic and acidic residues. A Phosphoserine modification is found at S909.

As to quaternary structure, component of the eukaryotic translation initiation factor 3 (eIF-3) complex, which is composed of 13 subunits: EIF3A, EIF3B, EIF3C, EIF3D, EIF3E, EIF3F, EIF3G, EIF3H, EIF3I, EIF3J, EIF3K, EIF3L and EIF3M. The eIF-3 complex appears to include 3 stable modules: module A is composed of EIF3A, EIF3B, EIF3G and EIF3I; module B is composed of EIF3F, EIF3H, and EIF3M; and module C is composed of EIF3C, EIF3D, EIF3E, EIF3K and EIF3L. EIF3C of module C binds EIF3B of module A and EIF3H of module B, thereby linking the three modules. EIF3J is a labile subunit that binds to the eIF-3 complex via EIF3B. The eIF-3 complex interacts with RPS6KB1 under conditions of nutrient depletion. Mitogenic stimulation leads to binding and activation of a complex composed of MTOR and RPTOR, leading to phosphorylation and release of RPS6KB1 and binding of EIF4B to eIF-3. Identified in a HCV IRES-mediated translation complex, at least composed of EIF3C, IGF2BP1, RPS3 and HCV RNA-replicon. Interacts with ALKBH4, IFIT1 and IFIT2. Interacts with BZW2/5MP1. Phosphorylated. Phosphorylation is enhanced upon serum stimulation.

It is found in the cytoplasm. Functionally, component of the eukaryotic translation initiation factor 3 (eIF-3) complex, which is required for several steps in the initiation of protein synthesis. The eIF-3 complex associates with the 40S ribosome and facilitates the recruitment of eIF-1, eIF-1A, eIF-2:GTP:methionyl-tRNAi and eIF-5 to form the 43S pre-initiation complex (43S PIC). The eIF-3 complex stimulates mRNA recruitment to the 43S PIC and scanning of the mRNA for AUG recognition. The eIF-3 complex is also required for disassembly and recycling of post-termination ribosomal complexes and subsequently prevents premature joining of the 40S and 60S ribosomal subunits prior to initiation. The eIF-3 complex specifically targets and initiates translation of a subset of mRNAs involved in cell proliferation, including cell cycling, differentiation and apoptosis, and uses different modes of RNA stem-loop binding to exert either translational activation or repression. The chain is Eukaryotic translation initiation factor 3 subunit C from Homo sapiens (Human).